The primary structure comprises 383 residues: Dual-specificity RNA methyltransferase RlmN (383 aa).

The active-site Proton acceptor is the E95. The Radical SAM core domain maps to 101 to 349 (EETRGTLCVS…TTVRKTRGDD (249 aa)). C108 and C354 are joined by a disulfide. [4Fe-4S] cluster-binding residues include C115, C119, and C122. S-adenosyl-L-methionine-binding positions include 180–181 (GE), S212, 234–236 (SLH), and N311. C354 serves as the catalytic S-methylcysteine intermediate.

This sequence belongs to the radical SAM superfamily. RlmN family. It depends on [4Fe-4S] cluster as a cofactor.

It is found in the cytoplasm. The catalysed reaction is adenosine(2503) in 23S rRNA + 2 reduced [2Fe-2S]-[ferredoxin] + 2 S-adenosyl-L-methionine = 2-methyladenosine(2503) in 23S rRNA + 5'-deoxyadenosine + L-methionine + 2 oxidized [2Fe-2S]-[ferredoxin] + S-adenosyl-L-homocysteine. The enzyme catalyses adenosine(37) in tRNA + 2 reduced [2Fe-2S]-[ferredoxin] + 2 S-adenosyl-L-methionine = 2-methyladenosine(37) in tRNA + 5'-deoxyadenosine + L-methionine + 2 oxidized [2Fe-2S]-[ferredoxin] + S-adenosyl-L-homocysteine. In terms of biological role, specifically methylates position 2 of adenine 2503 in 23S rRNA and position 2 of adenine 37 in tRNAs. m2A2503 modification seems to play a crucial role in the proofreading step occurring at the peptidyl transferase center and thus would serve to optimize ribosomal fidelity. In Paraburkholderia phytofirmans (strain DSM 17436 / LMG 22146 / PsJN) (Burkholderia phytofirmans), this protein is Dual-specificity RNA methyltransferase RlmN.